A 488-amino-acid chain; its full sequence is Protein nucleotidyltransferase YdiU (488 aa).

Residues Gly-91, Gly-93, Arg-94, Lys-114, Asp-126, Gly-127, Arg-177, and Arg-184 each coordinate ATP. Catalysis depends on Asp-253, which acts as the Proton acceptor. Mg(2+) contacts are provided by Asn-254 and Asp-263. Asp-263 contacts ATP.

This sequence belongs to the SELO family. It depends on Mg(2+) as a cofactor. Mn(2+) serves as cofactor.

The catalysed reaction is L-seryl-[protein] + ATP = 3-O-(5'-adenylyl)-L-seryl-[protein] + diphosphate. The enzyme catalyses L-threonyl-[protein] + ATP = 3-O-(5'-adenylyl)-L-threonyl-[protein] + diphosphate. It carries out the reaction L-tyrosyl-[protein] + ATP = O-(5'-adenylyl)-L-tyrosyl-[protein] + diphosphate. It catalyses the reaction L-histidyl-[protein] + UTP = N(tele)-(5'-uridylyl)-L-histidyl-[protein] + diphosphate. The catalysed reaction is L-seryl-[protein] + UTP = O-(5'-uridylyl)-L-seryl-[protein] + diphosphate. The enzyme catalyses L-tyrosyl-[protein] + UTP = O-(5'-uridylyl)-L-tyrosyl-[protein] + diphosphate. In terms of biological role, nucleotidyltransferase involved in the post-translational modification of proteins. It can catalyze the addition of adenosine monophosphate (AMP) or uridine monophosphate (UMP) to a protein, resulting in modifications known as AMPylation and UMPylation. The polypeptide is Protein nucleotidyltransferase YdiU (Bacillus cereus (strain ATCC 14579 / DSM 31 / CCUG 7414 / JCM 2152 / NBRC 15305 / NCIMB 9373 / NCTC 2599 / NRRL B-3711)).